The primary structure comprises 512 residues: GMP synthase [glutamine-hydrolyzing] (512 aa).

The 191-residue stretch at 7–197 (LVLVVDFGGQ…LFKVAGLKAD (191 aa)) folds into the Glutamine amidotransferase type-1 domain. C84 (nucleophile) is an active-site residue. Residues H171 and E173 contribute to the active site. The GMPS ATP-PPase domain occupies 198-387 (WSMASFAEEK…LGIPHKLVWR (190 aa)). Residue 225–231 (SGGVDSS) participates in ATP binding.

In terms of assembly, homodimer.

The enzyme catalyses XMP + L-glutamine + ATP + H2O = GMP + L-glutamate + AMP + diphosphate + 2 H(+). The protein operates within purine metabolism; GMP biosynthesis; GMP from XMP (L-Gln route): step 1/1. Functionally, catalyzes the synthesis of GMP from XMP. The polypeptide is GMP synthase [glutamine-hydrolyzing] (Clostridium novyi (strain NT)).